The sequence spans 291 residues: MAESGTLPTGFGELEVLAVGTVLLVEALSGLSLNILTILSFCKTPELRTPSHLLVLSLALADSGISLNALVAATSSLLRRWPYGSEGCQAHGFQGFVTALASICSSAAVAWGRYHHFCTRSRLDWNTAVSLVFFVWLSSAFWAALPLLGWGHYDYEPLGTCCTLDYSRGDRNFTSFLFTMAFFNFLLPLFITVVSYRLMEQKLGKTSRPPVNTVLPARTLLLGWGPYALLYLYATIADATSISPKLQMVPALIAKAVPTVNAMNYALGSEMVHRGIWQCLSPQRREHSREQ.

The Extracellular portion of the chain corresponds to 1 to 15 (MAESGTLPTGFGELE). The helical transmembrane segment at 16–36 (VLAVGTVLLVEALSGLSLNIL) threads the bilayer. Topologically, residues 37 to 52 (TILSFCKTPELRTPSH) are cytoplasmic. Residues 53–73 (LLVLSLALADSGISLNALVAA) traverse the membrane as a helical segment. At 74–91 (TSSLLRRWPYGSEGCQAH) the chain is on the extracellular side. The cysteines at positions 88 and 162 are disulfide-linked. A helical membrane pass occupies residues 92 to 112 (GFQGFVTALASICSSAAVAWG). The Cytoplasmic portion of the chain corresponds to 113–130 (RYHHFCTRSRLDWNTAVS). A helical transmembrane segment spans residues 131 to 151 (LVFFVWLSSAFWAALPLLGWG). Residues 152–175 (HYDYEPLGTCCTLDYSRGDRNFTS) lie on the Extracellular side of the membrane. N172 carries an N-linked (GlcNAc...) asparagine glycan. Residues 176 to 196 (FLFTMAFFNFLLPLFITVVSY) form a helical membrane-spanning segment. The Cytoplasmic portion of the chain corresponds to 197-219 (RLMEQKLGKTSRPPVNTVLPART). The helical transmembrane segment at 220–240 (LLLGWGPYALLYLYATIADAT) threads the bilayer. Residues 241–247 (SISPKLQ) are Extracellular-facing. The helical transmembrane segment at 248–268 (MVPALIAKAVPTVNAMNYALG) threads the bilayer. Position 255 is an N6-(retinylidene)lysine (K255). The Cytoplasmic portion of the chain corresponds to 269–291 (SEMVHRGIWQCLSPQRREHSREQ).

It belongs to the G-protein coupled receptor 1 family. Opsin subfamily. In terms of processing, covalently binds all-trans- and 11-cis-retinal. In terms of tissue distribution, preferentially expressed at high levels in the retinal pigment epithelium (RPE) and Mueller cells of the neural retina.

It localises to the membrane. Its function is as follows. Receptor for all-trans- and 11-cis-retinal. Binds preferentially to the former and may catalyze the isomerization of the chromophore by a retinochrome-like mechanism. The sequence is that of RPE-retinal G protein-coupled receptor (RGR) from Bos taurus (Bovine).